Reading from the N-terminus, the 430-residue chain is uncharacterized protein (430 aa).

This is an uncharacterized protein from Escherichia coli (strain K12).